The sequence spans 22 residues: Myofibril-bound serine protease (22 aa).

It belongs to the peptidase S1 family. Detected in muscle (at protein level).

The protein localises to the cytoplasm. Inhibited by the serine protease inhibitors, antipain, aprotinin, DFP, leupeptin, STI and TLCK, and by the cysteine proteinase inhibitors DTNB and to a lesser extent E-64. Not inhibited by the metalloproteinase inhibitor EDTA. Serine protease that selectively cleaves Arg-|-Xaa bonds. The polypeptide is Myofibril-bound serine protease (Cyprinus carpio (Common carp)).